Reading from the N-terminus, the 170-residue chain is MDLKSLIRDVPDFPKPGILFRDLTTLLQNQAGLRYVIDQLVEKHANAGIDYVAGIESRGFIFGAPLAYRLGAGFIPLRKPGKLCAPVYAVEYELEYGRDRLEMHQDAIEPGRRVLIVDDLIATGGTAAAAAGLIQKAQAELYGFAFIVELTDLAGRQKLPDVPITTLVTY.

Belongs to the purine/pyrimidine phosphoribosyltransferase family. Homodimer.

The protein localises to the cytoplasm. The enzyme catalyses AMP + diphosphate = 5-phospho-alpha-D-ribose 1-diphosphate + adenine. It participates in purine metabolism; AMP biosynthesis via salvage pathway; AMP from adenine: step 1/1. Functionally, catalyzes a salvage reaction resulting in the formation of AMP, that is energically less costly than de novo synthesis. The sequence is that of Adenine phosphoribosyltransferase from Thermosynechococcus vestitus (strain NIES-2133 / IAM M-273 / BP-1).